Here is a 390-residue protein sequence, read N- to C-terminus: Copper-containing nitrite reductase (390 aa).

The N-terminal stretch at 1 to 18 (MKRQALAAMIASLFALAA) is a signal peptide. Cys-19 carries the N-palmitoyl cysteine lipid modification. Cys-19 is lipidated: S-diacylglycerol cysteine. A disordered region spans residues 30 to 51 (ETPAAAAEAASSAAQTAAETPS). Plastocyanin-like domains lie at 101-195 (WTFD…ILVE) and 245-346 (GHVG…LKVE). Cu cation is bound by residues His-134, His-139, His-174, Cys-175, His-183, and Met-188. Residue His-139 participates in substrate binding. His-280 provides a ligand contact to substrate. His-329 provides a ligand contact to Cu cation. The tract at residues 367-390 (GAAPAASAPAASAPAASASEKSVY) is disordered. Low complexity predominate over residues 368-390 (AAPAASAPAASAPAASASEKSVY). A run of 3 repeats spans residues 371 to 375 (AASAP), 376 to 380 (AASAP), and 381 to 385 (AASAS). Positions 371 to 385 (AASAPAASAPAASAS) are 3 X 5 AA tandem repeats of A-A-S-A-P.

The protein belongs to the multicopper oxidase family. In terms of assembly, homotrimer. It depends on Cu(+) as a cofactor. The cofactor is Cu(2+).

It localises to the cell outer membrane. The catalysed reaction is nitric oxide + Fe(III)-[cytochrome c] + H2O = Fe(II)-[cytochrome c] + nitrite + 2 H(+). Its function is as follows. Catalyzes the reduction of nitrite to nitric oxide (NO). It could be essential for growth and survival in oxygen-depleted environments. This Neisseria meningitidis serogroup B (strain ATCC BAA-335 / MC58) protein is Copper-containing nitrite reductase (aniA).